The primary structure comprises 74 residues: Conotoxin Vc6.11 (74 aa).

An N-terminal signal peptide occupies residues 1-19; sequence MEKLTILLLVAAVLMSTQA. The propeptide occupies 20–41; sequence LIQEQRQKAKINLFSKRKPSAE. Cystine bridges form between C55/C66 and C61/C71.

Belongs to the conotoxin O2 superfamily. Expressed by the venom duct.

The protein resides in the secreted. Its function is as follows. Inhibits voltage-gated ion channels. This chain is Conotoxin Vc6.11, found in Conus victoriae (Queen Victoria cone).